The following is a 498-amino-acid chain: Beta-1,3-glucosyltransferase (498 aa).

Over 1 to 6 (MRPPAC) the chain is Cytoplasmic. Residues 7–27 (WWLLAPPALLALLTCSLAFGL) form a helical; Signal-anchor for type II membrane protein membrane-spanning segment. Over 28 to 498 (ASEDTKKEVK…ETQKGFREEL (471 aa)) the chain is Lumenal. N336 carries an N-linked (GlcNAc...) asparagine glycan. The short motif at 495-498 (REEL) is the Prevents secretion from ER element.

It belongs to the glycosyltransferase 31 family. As to expression, widely expressed, with highest levels in testis and uterus.

It is found in the endoplasmic reticulum membrane. It functions in the pathway protein modification; protein glycosylation. O-glucosyltransferase that transfers glucose toward fucose with a beta-1,3 linkage. Specifically glucosylates O-linked fucosylglycan on TSP type-1 domains of proteins, thereby contributing to elongation of O-fucosylglycan. The sequence is that of Beta-1,3-glucosyltransferase from Homo sapiens (Human).